The following is a 426-amino-acid chain: Pistil-specific extensin-like protein (426 aa).

The N-terminal stretch at 1 to 23 (MAVIISSKVLLIQLFVLVLGSFS) is a signal peptide. Disordered stretches follow at residues 56 to 109 (GPTF…GSKL) and 121 to 254 (NLPD…AAEP). Composition is skewed to pro residues over residues 60-94 (VLPP…PLIP), 123-161 (PDVP…PSPP), 168-224 (PPQP…PPPP), and 231-254 (LLPP…AAEP). Tandem repeats lie at residues 69 to 73 (SPPPP), 76 to 80 (SPPPP), and 83 to 87 (SPPPP). Residues 69–182 (SPPPPSPSPP…PAKQPSPPPP (114 aa)) form a 4 X 5 AA repeats of S-P(4) region. The stretch at 178–182 (SPPPP) is repeat 4. N310 carries N-linked (GlcNAc...) asparagine glycosylation.

Pistil (stigma and style tissue).

The sequence is that of Pistil-specific extensin-like protein from Nicotiana tabacum (Common tobacco).